The sequence spans 224 residues: uncharacterized protein (224 aa).

Zn(2+) contacts are provided by histidine 57, histidine 59, aspartate 61, histidine 62, histidine 138, aspartate 162, and histidine 203.

This sequence belongs to the metallo-beta-lactamase superfamily. Glyoxalase II family. It depends on Zn(2+) as a cofactor.

This is an uncharacterized protein from Mycobacterium tuberculosis (strain CDC 1551 / Oshkosh).